The following is a 184-amino-acid chain: MIYPIVAYGDPVLKKVAQDIEKGSLDVVKMSADMFETMENAHGVGLAAPQVALNLRMFVIDTSVFDDEKITPVRKTFINPVIEEEWGDEWPYEEGCLSIPGVRADVYRPANLRIRYFDTDWKEHVEEFDGMTARVIQHEYDHIEGVLFVDHLSSIKKRLLKGKLTNISKGDCDASYRMKFPIKK.

Fe cation-binding residues include Cys96 and His138. Residue Glu139 is part of the active site. His142 is a Fe cation binding site.

This sequence belongs to the polypeptide deformylase family. Requires Fe(2+) as cofactor.

The catalysed reaction is N-terminal N-formyl-L-methionyl-[peptide] + H2O = N-terminal L-methionyl-[peptide] + formate. Functionally, removes the formyl group from the N-terminal Met of newly synthesized proteins. Requires at least a dipeptide for an efficient rate of reaction. N-terminal L-methionine is a prerequisite for activity but the enzyme has broad specificity at other positions. The chain is Peptide deformylase from Cytophaga hutchinsonii (strain ATCC 33406 / DSM 1761 / CIP 103989 / NBRC 15051 / NCIMB 9469 / D465).